Reading from the N-terminus, the 140-residue chain is Holo-[acyl-carrier-protein] synthase (140 aa).

Mg(2+)-binding residues include Asp-9 and Glu-63.

It belongs to the P-Pant transferase superfamily. AcpS family. Mg(2+) is required as a cofactor.

Its subcellular location is the cytoplasm. The catalysed reaction is apo-[ACP] + CoA = holo-[ACP] + adenosine 3',5'-bisphosphate + H(+). Transfers the 4'-phosphopantetheine moiety from coenzyme A to a Ser of acyl-carrier-protein. In Paraburkholderia phytofirmans (strain DSM 17436 / LMG 22146 / PsJN) (Burkholderia phytofirmans), this protein is Holo-[acyl-carrier-protein] synthase.